Reading from the N-terminus, the 257-residue chain is Ubiquinone biosynthesis O-methyltransferase (257 aa).

The S-adenosyl-L-methionine site is built by R43, G77, D98, and M144.

It belongs to the methyltransferase superfamily. UbiG/COQ3 family.

The catalysed reaction is a 3-demethylubiquinol + S-adenosyl-L-methionine = a ubiquinol + S-adenosyl-L-homocysteine + H(+). It carries out the reaction a 3-(all-trans-polyprenyl)benzene-1,2-diol + S-adenosyl-L-methionine = a 2-methoxy-6-(all-trans-polyprenyl)phenol + S-adenosyl-L-homocysteine + H(+). The protein operates within cofactor biosynthesis; ubiquinone biosynthesis. Its function is as follows. O-methyltransferase that catalyzes the 2 O-methylation steps in the ubiquinone biosynthetic pathway. This Psychrobacter cryohalolentis (strain ATCC BAA-1226 / DSM 17306 / VKM B-2378 / K5) protein is Ubiquinone biosynthesis O-methyltransferase.